The sequence spans 99 residues: A-type ATP synthase subunit F (99 aa).

It belongs to the V-ATPase F subunit family. As to quaternary structure, has multiple subunits with at least A(3), B(3), C, D, E, F, H, I and proteolipid K(x).

The protein localises to the cell membrane. Its function is as follows. Component of the A-type ATP synthase that produces ATP from ADP in the presence of a proton gradient across the membrane. In Methanothrix thermoacetophila (strain DSM 6194 / JCM 14653 / NBRC 101360 / PT) (Methanosaeta thermophila), this protein is A-type ATP synthase subunit F.